We begin with the raw amino-acid sequence, 314 residues long: tRNA dimethylallyltransferase (314 aa).

Residue 9-16 coordinates ATP; that stretch reads GPTAVGKT. 11–16 contacts substrate; sequence TAVGKT. The interaction with substrate tRNA stretch occupies residues 34 to 37; that stretch reads DSVQ.

It belongs to the IPP transferase family. Monomer. Mg(2+) is required as a cofactor.

The enzyme catalyses adenosine(37) in tRNA + dimethylallyl diphosphate = N(6)-dimethylallyladenosine(37) in tRNA + diphosphate. In terms of biological role, catalyzes the transfer of a dimethylallyl group onto the adenine at position 37 in tRNAs that read codons beginning with uridine, leading to the formation of N6-(dimethylallyl)adenosine (i(6)A). This chain is tRNA dimethylallyltransferase, found in Desulfitobacterium hafniense (strain Y51).